We begin with the raw amino-acid sequence, 564 residues long: Large neutral amino acids transporter small subunit 3 (564 aa).

Residues 20-40 (VVENLFFSAVLLGWASLLIML) form a helical membrane-spanning segment. N-linked (GlcNAc...) asparagine glycans are attached at residues asparagine 54 and asparagine 57. A run of 5 helical transmembrane segments spans residues 78-98 (LGFT…GILM), 105-124 (PLRL…MALA), 131-151 (LSPL…CLTF), 165-185 (STFM…FPGI), and 191-211 (AGVP…LIFL). A phosphoserine mark is found at serine 262 and serine 267. The next 2 helical transmembrane spans lie at 303–323 (IFLW…FYMG) and 357–377 (SIFG…GYIM). A glycan (N-linked (GlcNAc...) asparagine) is linked at asparagine 396. A Phosphoserine modification is found at serine 398. A run of 4 helical transmembrane segments spans residues 424–444 (AINA…ACLI), 451–471 (LLAF…CGGL), 490–510 (LISA…VGPL), and 515–535 (FWVN…PSYL). Asparagine 558 carries an N-linked (GlcNAc...) asparagine glycan.

This sequence belongs to the SLC43A transporter (TC 2.A.1.44) family. As to expression, expressed in the kidney cortex as well as liver, pancreas, and skeletal muscle. In kidney expressed in the glomerular tuft (at protein level). Expressed in liver, skeletal muscle and pancreas (at protein level).

It is found in the cell membrane. Its subcellular location is the apical cell membrane. The protein localises to the endoplasmic reticulum membrane. The catalysed reaction is D-leucine(in) = D-leucine(out). The enzyme catalyses L-leucine(in) = L-leucine(out). It catalyses the reaction L-isoleucine(in) = L-isoleucine(out). It carries out the reaction L-methionine(in) = L-methionine(out). The catalysed reaction is L-phenylalanine(in) = L-phenylalanine(out). The enzyme catalyses L-valine(in) = L-valine(out). Its function is as follows. Uniport that mediates the transport of neutral amino acids such as L-leucine, L-isoleucine, L-valine, and L-phenylalanine. The transport activity is sodium ions-independent, electroneutral and mediated by a facilitated diffusion. In Mus musculus (Mouse), this protein is Large neutral amino acids transporter small subunit 3.